A 206-amino-acid chain; its full sequence is LexA repressor (206 aa).

Positions 29–49 form a DNA-binding region, H-T-H motif; that stretch reads VREICEAVGLRSTSTVHGHLA. Catalysis depends on for autocatalytic cleavage activity residues Ser130 and Lys167.

This sequence belongs to the peptidase S24 family. As to quaternary structure, homodimer.

It catalyses the reaction Hydrolysis of Ala-|-Gly bond in repressor LexA.. In terms of biological role, represses a number of genes involved in the response to DNA damage (SOS response), including recA and lexA. In the presence of single-stranded DNA, RecA interacts with LexA causing an autocatalytic cleavage which disrupts the DNA-binding part of LexA, leading to derepression of the SOS regulon and eventually DNA repair. The chain is LexA repressor from Alkaliphilus oremlandii (strain OhILAs) (Clostridium oremlandii (strain OhILAs)).